The chain runs to 176 residues: ATP synthase subunit b (176 aa).

Residues 24-43 form a helical membrane-spanning segment; sequence FAFRVVNFVIFAGIIWKAAG.

Belongs to the ATPase B chain family. In terms of assembly, F-type ATPases have 2 components, F(1) - the catalytic core - and F(0) - the membrane proton channel. F(1) has five subunits: alpha(3), beta(3), gamma(1), delta(1), epsilon(1). F(0) has three main subunits: a(1), b(2) and c(10-14). The alpha and beta chains form an alternating ring which encloses part of the gamma chain. F(1) is attached to F(0) by a central stalk formed by the gamma and epsilon chains, while a peripheral stalk is formed by the delta and b chains.

It is found in the cell inner membrane. Functionally, f(1)F(0) ATP synthase produces ATP from ADP in the presence of a proton or sodium gradient. F-type ATPases consist of two structural domains, F(1) containing the extramembraneous catalytic core and F(0) containing the membrane proton channel, linked together by a central stalk and a peripheral stalk. During catalysis, ATP synthesis in the catalytic domain of F(1) is coupled via a rotary mechanism of the central stalk subunits to proton translocation. Its function is as follows. Component of the F(0) channel, it forms part of the peripheral stalk, linking F(1) to F(0). The sequence is that of ATP synthase subunit b from Nitratidesulfovibrio vulgaris (strain ATCC 29579 / DSM 644 / CCUG 34227 / NCIMB 8303 / VKM B-1760 / Hildenborough) (Desulfovibrio vulgaris).